Here is a 154-residue protein sequence, read N- to C-terminus: 6,7-dimethyl-8-ribityllumazine synthase (154 aa).

Residues Phe23, 57 to 59, and 81 to 83 contribute to the 5-amino-6-(D-ribitylamino)uracil site; these read AFE and AVI. 86–87 lines the (2S)-2-hydroxy-3-oxobutyl phosphate pocket; it reads ST. The Proton donor role is filled by His89. Phe114 lines the 5-amino-6-(D-ribitylamino)uracil pocket. Residue Arg128 coordinates (2S)-2-hydroxy-3-oxobutyl phosphate.

It belongs to the DMRL synthase family.

It carries out the reaction (2S)-2-hydroxy-3-oxobutyl phosphate + 5-amino-6-(D-ribitylamino)uracil = 6,7-dimethyl-8-(1-D-ribityl)lumazine + phosphate + 2 H2O + H(+). It functions in the pathway cofactor biosynthesis; riboflavin biosynthesis; riboflavin from 2-hydroxy-3-oxobutyl phosphate and 5-amino-6-(D-ribitylamino)uracil: step 1/2. Its function is as follows. Catalyzes the formation of 6,7-dimethyl-8-ribityllumazine by condensation of 5-amino-6-(D-ribitylamino)uracil with 3,4-dihydroxy-2-butanone 4-phosphate. This is the penultimate step in the biosynthesis of riboflavin. This is 6,7-dimethyl-8-ribityllumazine synthase from Syntrophotalea carbinolica (strain DSM 2380 / NBRC 103641 / GraBd1) (Pelobacter carbinolicus).